The chain runs to 270 residues: Putative pyruvate, phosphate dikinase regulatory protein (270 aa).

ADP is bound at residue 149-156; sequence GVSRTSKT.

The protein belongs to the pyruvate, phosphate/water dikinase regulatory protein family. PDRP subfamily.

It catalyses the reaction N(tele)-phospho-L-histidyl/L-threonyl-[pyruvate, phosphate dikinase] + ADP = N(tele)-phospho-L-histidyl/O-phospho-L-threonyl-[pyruvate, phosphate dikinase] + AMP + H(+). The enzyme catalyses N(tele)-phospho-L-histidyl/O-phospho-L-threonyl-[pyruvate, phosphate dikinase] + phosphate + H(+) = N(tele)-phospho-L-histidyl/L-threonyl-[pyruvate, phosphate dikinase] + diphosphate. Its function is as follows. Bifunctional serine/threonine kinase and phosphorylase involved in the regulation of the pyruvate, phosphate dikinase (PPDK) by catalyzing its phosphorylation/dephosphorylation. The sequence is that of Putative pyruvate, phosphate dikinase regulatory protein from Sphingopyxis alaskensis (strain DSM 13593 / LMG 18877 / RB2256) (Sphingomonas alaskensis).